The sequence spans 214 residues: Putative nickel/cobalt efflux system MJ1092 (214 aa).

The next 6 helical transmembrane spans lie at 2-22 (VMIMELLYAITAFILGMLHAL), 46-66 (ILLGTTITISHTAVIFLLGIL), 79-99 (VHDMMSVVGGLILIAVGIWII), 116-136 (VITLGLSAGLVPCPAALAVLL), 149-169 (IYVAIFSIGLAISLTGLAVAF), and 188-208 (LPLISGSIIILIGLYTIAHPI).

The protein belongs to the NiCoT transporter (TC 2.A.52) family.

It localises to the cell membrane. Efflux system for nickel and cobalt. This chain is Putative nickel/cobalt efflux system MJ1092, found in Methanocaldococcus jannaschii (strain ATCC 43067 / DSM 2661 / JAL-1 / JCM 10045 / NBRC 100440) (Methanococcus jannaschii).